A 94-amino-acid chain; its full sequence is Probable HNH endonuclease (94 aa).

This sequence belongs to the skunalikevirus HNH endonuclease family.

Functionally, probable HNH endonuclease. This is Probable HNH endonuclease from Lactococcus lactis (Lactococcus lactis bacteriophage SK1).